The following is a 106-amino-acid chain: MSEEFQESEVIFSDESFTRKDNKISHNNENYERKSTEKDKISSPVRIPSRTTIRYTEEEGEMTPPHVIIEKRRTEAQMAFSFCTLKGRDLSRHRNTVLRMTGFLEV.

Positions 1-65 are disordered; that stretch reads MSEEFQESEV…TEEEGEMTPP (65 aa). The span at 16–41 shows a compositional bias: basic and acidic residues; sequence SFTRKDNKISHNNENYERKSTEKDKI.

This sequence belongs to the senescence regulator S40 family.

It localises to the nucleus. Regulates senescence either by modulating WRKY53 or by activating SAG12. Affects the natural variation of cyst nematodes sex ratio and susceptibility to parasitic nematodes, depending on single nucleotide polymorphism (SNPs) between cultivars. This is Protein S40-3 from Arabidopsis thaliana (Mouse-ear cress).